Here is a 171-residue protein sequence, read N- to C-terminus: Co-chaperone protein HscB homolog (171 aa).

One can recognise a J domain in the interval 2–74 (NYFELFGLPI…LRRAEYLLSL (73 aa)).

Belongs to the HscB family. As to quaternary structure, interacts with HscA and stimulates its ATPase activity.

Its function is as follows. Co-chaperone involved in the maturation of iron-sulfur cluster-containing proteins. Seems to help targeting proteins to be folded toward HscA. The polypeptide is Co-chaperone protein HscB homolog (Vibrio cholerae serotype O1 (strain M66-2)).